The following is a 410-amino-acid chain: Mannosyl phosphorylinositol ceramide synthase regulatory protein CSG2 (410 aa).

The N-terminal stretch at 1 to 17 is a signal peptide; sequence MSTTLLWFSSVIGYVIQ. The Lumenal segment spans residues 18 to 50; the sequence is TKCLSNIQSKKEISVGPNGTIATPETNGDNGNS. N-linked (GlcNAc...) asparagine glycosylation is found at asparagine 35 and asparagine 49. The helical transmembrane segment at 51–71 threads the bilayer; it reads SSLTFYLTFMYFASWLLLVPA. Residues 72-141 are Cytoplasmic-facing; it reads SRLWEKMRPM…SVATFKYVAK (70 aa). A helical transmembrane segment spans residues 142 to 161; the sequence is LTVLALIMIVADLTYNMALS. Over 162–167 the chain is Lumenal; the sequence is LSPAFD. Residues 168–187 form a helical membrane-spanning segment; it reads VALMQNTAIFEIVTLLYGVC. Residues 188–197 lie on the Cytoplasmic side of the membrane; sequence GISRKNYVFR. Residues 198-217 form a helical membrane-spanning segment; the sequence is NFLIMMNAVIGILIISYTKA. Over 218–245 the chain is Lumenal; sequence TCDMLAGKLSVNPNTGELSDPFLFDRLK. The chain crosses the membrane as a helical span at residues 246 to 265; sequence GALICGLGALIMGPFAVLWN. The Cytoplasmic segment spans residues 266-285; that stretch reads RWFCSNISKNENSAVVLVKQ. The chain crosses the membrane as a helical span at residues 286 to 305; it reads STHMALIGIIGMVILLPFIP. The Lumenal portion of the chain corresponds to 306–324; it reads KFPSRESVESISLFYNDKS. A helical membrane pass occupies residues 325 to 344; the sequence is FWFSLLGSIIFGSLPSLISI. The Cytoplasmic portion of the chain corresponds to 345–355; it reads LELNRKAPAEY. Residues 356-374 traverse the membrane as a helical segment; it reads LTTCNLGAIIFMGLAEWVC. Topologically, residues 375–385 are lumenal; sequence EPTQTTIVRWE. The helical transmembrane segment at 386–404 threads the bilayer; it reads VIGYIMLTVSLLVLSVTLG. Topologically, residues 405-410 are cytoplasmic; it reads EGKYHH.

Heterodimer of CSH1 and CSG2, and SUR1 and CSG2.

Its subcellular location is the endoplasmic reticulum membrane. Its function is as follows. Required for calcium regulation. May regulate calcium accumulation by a non-vacuole organelle. Also regulates the activity of CSH1 and SUR1 during mannosyl phosphorylinositol ceramide synthesis. In Saccharomyces cerevisiae (strain ATCC 204508 / S288c) (Baker's yeast), this protein is Mannosyl phosphorylinositol ceramide synthase regulatory protein CSG2 (CSG2).